The sequence spans 711 residues: Polyribonucleotide nucleotidyltransferase (711 aa).

Residues D490 and D496 each contribute to the Mg(2+) site. Positions 556–615 constitute a KH domain; sequence PRIETMQIPTDKIREVIGSGGKVIREIVEVSGAKVDINDEGIIKIASPNGEAIKKAYDMI. An S1 motif domain is found at 625-693; it reads GMVYTGTVVK…DRGKVRLSMK (69 aa).

This sequence belongs to the polyribonucleotide nucleotidyltransferase family. Mg(2+) serves as cofactor.

The protein localises to the cytoplasm. The enzyme catalyses RNA(n+1) + phosphate = RNA(n) + a ribonucleoside 5'-diphosphate. Its function is as follows. Involved in mRNA degradation. Catalyzes the phosphorolysis of single-stranded polyribonucleotides processively in the 3'- to 5'-direction. The polypeptide is Polyribonucleotide nucleotidyltransferase (Roseobacter denitrificans (strain ATCC 33942 / OCh 114) (Erythrobacter sp. (strain OCh 114))).